We begin with the raw amino-acid sequence, 741 residues long: 2-5A-dependent ribonuclease (741 aa).

Residues 1–21 form a disordered region; the sequence is MESRDHNNPQEGPTSSSGRRA. Residues 9–18 show a composition bias toward polar residues; sequence PQEGPTSSSG. ANK repeat units lie at residues 24–53, 58–87, 91–120, 124–153, 167–197, 201–234, 238–268, 272–301, and 303–329; these read EDNHLLIKAVQNEDVDLVQQLLEGGANVNF, GGWTPLHNAVQMSREDIVELLLRHGADPVL, NGATPFILAAIAGSVKLLKLFLSKGADVNE, YGFTAFMEAAVYGKVKALKFLYKRGANVNL, GGATALMDAAEKGHVEVLKILLDEMGADVNA, MGRNALIHALLSSDDSDVEAITHLLLDHGADVNV, RGKTPLILAVEKKHLGLVQRLLEQEHIEIND, DGKTALLLAVELKLKKIAELLCKRGASTDC, and DLVMTARRNYDHSLVKVLLSHGAKEDF. 2-5A binding (P-loop) regions lie at residues 229 to 242 and 253 to 275; these read GADVNVRGERGKTP and GLVQRLLEQEHIEINDTDSDGKT. In terms of domain architecture, Protein kinase spans 365–586; it reads IDEKYKIADT…LSDLLGHPFF (222 aa). The segment at 395-444 adopts a C6-type; atypical zinc-finger fold; sequence CEGSPRAQREVSCLQSSRENSHLVTFYGSESHRGHLFVCVTLCEQTLEAC. The 135-residue stretch at 589 to 723 folds into the KEN domain; it reads WESRYRTLRN…KHFPQTHSPN (135 aa). Lys-684 is subject to N6-acetyllysine. Residues 715-741 form a disordered region; that stretch reads HFPQTHSPNKPQCDGAGGASGLASPGC.

The protein belongs to the protein kinase superfamily. Monomer (inactive form) or homodimer. Interacts with ABCE1; this interaction inhibits the RNASEL. Requires Mn(2+) as cofactor. It depends on Mg(2+) as a cofactor. As to expression, highly expressed in spleen and thymus followed by prostate, testis, uterus, small intestine, colon and peripheral blood leukocytes.

It localises to the cytoplasm. It is found in the mitochondrion. Its activity is regulated as follows. After binding to 2-5A (5'-phosphorylated 2',5'-linked oligoadenylates) the homodimerization and subsequent activation occurs. Inhibited by RNASEL inhibitor ABCE1/RLI, a cytoplasmic member of the ATP-binding cassette (ABC) transporter family. Endoribonuclease that functions in the interferon (IFN) antiviral response. In INF treated and virus infected cells, RNASEL probably mediates its antiviral effects through a combination of direct cleavage of single-stranded viral RNAs, inhibition of protein synthesis through the degradation of rRNA, induction of apoptosis, and induction of other antiviral genes. RNASEL mediated apoptosis is the result of a JNK-dependent stress-response pathway leading to cytochrome c release from mitochondria and caspase-dependent apoptosis. Therefore, activation of RNASEL could lead to elimination of virus infected cells under some circumstances. In the crosstalk between autophagy and apoptosis proposed to induce autophagy as an early stress response to small double-stranded RNA and at later stages of prolonged stress to activate caspase-dependent proteolytic cleavage of BECN1 to terminate autophagy and promote apoptosis. Might play a central role in the regulation of mRNA turnover. Cleaves 3' of UpNp dimers, with preference for UU and UA sequences, to sets of discrete products ranging from between 4 and 22 nucleotides in length. This is 2-5A-dependent ribonuclease (RNASEL) from Homo sapiens (Human).